Here is a 449-residue protein sequence, read N- to C-terminus: Deoxyguanosinetriphosphate triphosphohydrolase-like protein (449 aa).

Positions 1–27 (MTSSVWQERRHGEDKQRRNDHRSPYQR) are disordered. Over residues 7–27 (QERRHGEDKQRRNDHRSPYQR) the composition is skewed to basic and acidic residues. An HD domain is found at 59–255 (RLTHSLEVSQ…MELADDIAYA (197 aa)).

Belongs to the dGTPase family. Type 2 subfamily.

The polypeptide is Deoxyguanosinetriphosphate triphosphohydrolase-like protein (Shewanella baltica (strain OS195)).